The primary structure comprises 254 residues: Ribonuclease PH (254 aa).

Phosphate is bound by residues R90 and 128 to 130; that span reads GTR.

The protein belongs to the RNase PH family. Homohexameric ring arranged as a trimer of dimers.

It carries out the reaction tRNA(n+1) + phosphate = tRNA(n) + a ribonucleoside 5'-diphosphate. In terms of biological role, phosphorolytic 3'-5' exoribonuclease that plays an important role in tRNA 3'-end maturation. Removes nucleotide residues following the 3'-CCA terminus of tRNAs; can also add nucleotides to the ends of RNA molecules by using nucleoside diphosphates as substrates, but this may not be physiologically important. Probably plays a role in initiation of 16S rRNA degradation (leading to ribosome degradation) during starvation. The polypeptide is Ribonuclease PH (Corynebacterium kroppenstedtii (strain DSM 44385 / JCM 11950 / CIP 105744 / CCUG 35717)).